We begin with the raw amino-acid sequence, 699 residues long: Pollen-specific leucine-rich repeat extensin-like protein 4 (699 aa).

The signal sequence occupies residues 1–39; that stretch reads MPFYKQPWVFSKVFVLAMAKPPSFGCCFFLLFFSFLSSS. A glycan (N-linked (GlcNAc...) asparagine) is linked at Asn-106. LRR repeat units lie at residues 133–157, 158–180, 182–205, 206–229, 231–251, 253–275, 276–299, 301–323, and 324–347; these read VTVV…LGLM, TDVA…SFEK, KLMH…VLSW, PDVK…LFKK, LDAI…SLGE, PASV…IGNM, KNLN…IGKL, NVTV…FVGL, and TSVE…ICQL. The N-linked (GlcNAc...) asparagine glycan is linked to Asn-301. Asn-352 is a glycosylation site (N-linked (GlcNAc...) asparagine). The interval 411 to 699 is disordered; that stretch reads KCAGGSSTPS…SPPPPMFAGY (289 aa). Pro residues-rich tracts occupy residues 421 to 466, 482 to 504, 518 to 659, and 690 to 699; these read KPSP…PVPT, KPSP…PQPD, PPPA…PPAP, and SPPPPMFAGY. The tract at residues 517-699 is contains the Ser-Pro(4) repeats; that stretch reads SPPPAPVNSP…SPPPPMFAGY (183 aa).

Hydroxylated on proline residues in the S-P-P-P-P repeat. In terms of processing, O-glycosylated on hydroxyprolines. As to expression, expressed in flowers, stamen, pollen, and pollinated carpels.

The protein localises to the secreted. Its subcellular location is the cell wall. Its function is as follows. Modulates cell morphogenesis by regulating cell wall formation and assembly, and/or growth polarization. The sequence is that of Pollen-specific leucine-rich repeat extensin-like protein 4 (PEX4) from Arabidopsis thaliana (Mouse-ear cress).